We begin with the raw amino-acid sequence, 98 residues long: Alpha-elicitin MGM-alpha (98 aa).

Disulfide bonds link Cys-3–Cys-71, Cys-27–Cys-56, and Cys-51–Cys-95.

This sequence belongs to the elicitin family.

Its subcellular location is the secreted. Induces local and distal defense responses (incompatible hypersensitive reaction) in plants from the solanaceae and cruciferae families. Elicits leaf necrosis and causes the accumulation of pathogenesis-related proteins. Might interact with the lipidic molecules of the plasma membrane. This is Alpha-elicitin MGM-alpha from Phytophthora megasperma (Potato pink rot fungus).